The primary structure comprises 76 residues: Protein OPG128 (76 aa).

A disulfide bond links Cys17 and Cys21.

The protein belongs to the orthopoxvirus OPG128 family. In terms of assembly, interacts with sulfhydryl oxidase OPG072; this interaction involves formation of a transient disulfide-bonded intermediate, allowing disulfide bond transfer. Interacts with OPG088; this interaction involves formation of a transient disulfide-bonded intermediate, allowing disulfide bond transfer.

Functionally, late protein which probably participates in disulfide bond formation by functioning as a thiol-disulfide transfer protein between membrane-associated OPG072 and OPG08. The complete pathway for formation of disulfide bonds in intracellular virion membrane proteins sequentially involves oxidation of OPG072, OPG128 and OPG08. The chain is Protein OPG128 (OPG128) from Bos taurus (Bovine).